Here is a 449-residue protein sequence, read N- to C-terminus: Lysine-sensitive aspartokinase 3 (449 aa).

The interval 2–245 (SEIVVSKFGG…AAKRIDEIAF (244 aa)) is aspartokinase. ATP is bound at residue 8–11 (KFGG). Residues Thr45, Glu119, and 198–201 (RGGS) each bind substrate. ATP contacts are provided by residues 221 to 222 (TD), Tyr227, Arg232, and 257 to 258 (KV). The interface stretch occupies residues 246–449 (AEAAEMATFG…VQKLHSNLFE (204 aa)). The required for homodimerization stretch occupies residues 299 to 449 (FRALALRRNQ…VQKLHSNLFE (151 aa)). Residues 313 to 394 (LHSLNMLHSR…GLALVALIGN (82 aa)) enclose the ACT domain. Residues Met318, Ser321, 324–325 (FL), 338–340 (SVD), and 345–346 (SE) each bind L-lysine.

It belongs to the aspartokinase family. Homodimer. In the inactive form a homotetramer is formed.

The catalysed reaction is L-aspartate + ATP = 4-phospho-L-aspartate + ADP. The protein operates within amino-acid biosynthesis; L-lysine biosynthesis via DAP pathway; (S)-tetrahydrodipicolinate from L-aspartate: step 1/4. With respect to regulation, synthesis and activity are sensitive to the allosteric inhibitor lysine, one of the end metabolites of the aspartic acid family branched pathway. The polypeptide is Lysine-sensitive aspartokinase 3 (lysC) (Escherichia coli (strain K12)).